A 502-amino-acid chain; its full sequence is Maturase K (502 aa).

Belongs to the intron maturase 2 family. MatK subfamily.

Its subcellular location is the plastid. The protein localises to the chloroplast. Its function is as follows. Usually encoded in the trnK tRNA gene intron. Probably assists in splicing its own and other chloroplast group II introns. In Stanleya pinnata (Prince's plume), this protein is Maturase K.